The following is a 147-amino-acid chain: Small ribosomal subunit protein uS12 (147 aa).

The protein belongs to the universal ribosomal protein uS12 family. As to quaternary structure, part of the 30S ribosomal subunit.

Its function is as follows. With S4 and S5 plays an important role in translational accuracy. Located at the interface of the 30S and 50S subunits. The polypeptide is Small ribosomal subunit protein uS12 (Staphylothermus marinus (strain ATCC 43588 / DSM 3639 / JCM 9404 / F1)).